Reading from the N-terminus, the 400-residue chain is Phosphoglycerate kinase (400 aa).

Substrate is bound by residues 19-21 (DLN), arginine 38, 61-64 (HLGR), arginine 124, and arginine 161. Residues lysine 211, glycine 299, glutamate 330, and 356 to 359 (GGDS) each bind ATP.

This sequence belongs to the phosphoglycerate kinase family. In terms of assembly, monomer.

The protein resides in the cytoplasm. The catalysed reaction is (2R)-3-phosphoglycerate + ATP = (2R)-3-phospho-glyceroyl phosphate + ADP. The protein operates within carbohydrate degradation; glycolysis; pyruvate from D-glyceraldehyde 3-phosphate: step 2/5. In Frankia casuarinae (strain DSM 45818 / CECT 9043 / HFP020203 / CcI3), this protein is Phosphoglycerate kinase.